A 423-amino-acid polypeptide reads, in one-letter code: Gamma-glutamyl phosphate reductase (423 aa).

The protein belongs to the gamma-glutamyl phosphate reductase family.

It is found in the cytoplasm. The enzyme catalyses L-glutamate 5-semialdehyde + phosphate + NADP(+) = L-glutamyl 5-phosphate + NADPH + H(+). Its pathway is amino-acid biosynthesis; L-proline biosynthesis; L-glutamate 5-semialdehyde from L-glutamate: step 2/2. Functionally, catalyzes the NADPH-dependent reduction of L-glutamate 5-phosphate into L-glutamate 5-semialdehyde and phosphate. The product spontaneously undergoes cyclization to form 1-pyrroline-5-carboxylate. This chain is Gamma-glutamyl phosphate reductase, found in Burkholderia ambifaria (strain MC40-6).